The primary structure comprises 149 residues: Large ribosomal subunit protein uL13 (149 aa).

The protein belongs to the universal ribosomal protein uL13 family. Part of the 50S ribosomal subunit.

Functionally, this protein is one of the early assembly proteins of the 50S ribosomal subunit, although it is not seen to bind rRNA by itself. It is important during the early stages of 50S assembly. In Gemmatimonas aurantiaca (strain DSM 14586 / JCM 11422 / NBRC 100505 / T-27), this protein is Large ribosomal subunit protein uL13.